The chain runs to 662 residues: Protein associated with UVRAG as autophagy enhancer (662 aa).

2 disordered regions span residues 1–34 and 58–131; these read MVSQ…RLLN and DVQQ…SLSS. The segment covering 58 to 71 has biased composition (low complexity); that stretch reads DVQQQPQDLQSQVP. The span at 100–113 shows a compositional bias: polar residues; it reads AETTLSEDTTDSVG. Residues 114 to 131 show a composition bias toward low complexity; the sequence is SASPHGSSEKSSSFSLSS. Residue Ser157 is modified to Phosphoserine; by MTOR. Residues 196–235 are interaction with UVRAG; sequence EVFVLPVDVEKENAHFYVADMIISAMEKMKCNILSQQQTE. Residues Lys483, Lys523, Lys533, Lys573, and Lys633 each carry the N6-acetyllysine modification.

Interacts with UVRAG; the interaction is direct and promotes association with the PI3K/PI3KC3 and HOPS complexes. Interacts with STX17. In terms of processing, phosphorylated by MTOR at Ser-157 under nutrient-rich conditions. Phosphorylation prevents acetylation by KAT5/TIP60 and impairs RUBCNL/PACER function and autophagosome maturation. Under autophagy induction, Phosphorylation by MTOR is repressed, enabling acetylation by KAT5/TIP60. Acetylated by KAT5/TIP60 under autophagy induction, promoting autophagosome maturation and lipid metabolism. Acetylation is prevented by phosphorylation by MTOR. Lys-483 and Lys-573 constitute the key sites for tuning function in autophagy. Expressed weakly in cervical carcinoma cell lines.

Its subcellular location is the cytoplasmic vesicle. It is found in the autophagosome membrane. Its function is as follows. Regulator of autophagy that promotes autophagosome maturation by facilitating the biogenesis of phosphatidylinositol 3-phosphate (PtdIns(3)P) in late steps of autophagy. Acts by antagonizing RUBCN, thereby stimulating phosphatidylinositol 3-kinase activity of the PI3K/PI3KC3 complex. Following anchorage to the autophagosomal SNARE STX17, promotes the recruitment of PI3K/PI3KC3 and HOPS complexes to the autophagosome to regulate the fusion specificity of autophagosomes with late endosomes/lysosomes. Binds phosphoinositides phosphatidylinositol 3-phosphate (PtdIns(3)P), 4-phosphate (PtdIns(4)P) and 5-phosphate (PtdIns(5)P). In addition to its role in autophagy, acts as a regulator of lipid and glycogen homeostasis. May act as a tumor suppressor. The chain is Protein associated with UVRAG as autophagy enhancer from Homo sapiens (Human).